A 143-amino-acid polypeptide reads, in one-letter code: Putative pre-16S rRNA nuclease (143 aa).

Belongs to the YqgF nuclease family.

The protein localises to the cytoplasm. Functionally, could be a nuclease involved in processing of the 5'-end of pre-16S rRNA. This is Putative pre-16S rRNA nuclease from Leuconostoc citreum (strain KM20).